The primary structure comprises 112 residues: Large ribosomal subunit protein eL33y (112 aa).

Belongs to the eukaryotic ribosomal protein eL33 family.

The sequence is that of Large ribosomal subunit protein eL33y (RPL35AC) from Arabidopsis thaliana (Mouse-ear cress).